A 196-amino-acid polypeptide reads, in one-letter code: Small ribosomal subunit protein uS4c (196 aa).

Residues 15–43 (LGALPGLTRKTPKSGSNQKKKFHSGKKEQ) form a disordered region. Positions 89-150 (MRLDNILFRL…NQRSKRLVQN (62 aa)) constitute an S4 RNA-binding domain.

Belongs to the universal ribosomal protein uS4 family. Part of the 30S ribosomal subunit. Contacts protein S5. The interaction surface between S4 and S5 is involved in control of translational fidelity.

It localises to the plastid. Its subcellular location is the chloroplast. Functionally, one of the primary rRNA binding proteins, it binds directly to 16S rRNA where it nucleates assembly of the body of the 30S subunit. With S5 and S12 plays an important role in translational accuracy. The polypeptide is Small ribosomal subunit protein uS4c (rps4) (Melinis repens (Red Natal grass)).